The primary structure comprises 657 residues: Hemocyanin A chain (657 aa).

An intrachain disulfide couples C93 to C98. N167 carries N-linked (GlcNAc...) asparagine glycosylation. H194, H198, H224, H344, H348, and H384 together coordinate Cu cation. 2 disulfide bridges follow: C483–C502 and C562–C609. Residues E594–Y616 form a disordered region.

Belongs to the tyrosinase family. Hemocyanin subfamily. In terms of assembly, hexamer of a number of different chains, of which A, B, and C have been identified. In terms of tissue distribution, hemolymph.

The protein localises to the secreted. It is found in the extracellular space. Its function is as follows. Hemocyanins are copper-containing oxygen carriers occurring freely dissolved in the hemolymph of many mollusks and arthropods. This Panulirus interruptus (California spiny lobster) protein is Hemocyanin A chain.